A 511-amino-acid polypeptide reads, in one-letter code: Cobyric acid synthase (511 aa).

Residues 251–443 (LLDIAIICLP…IHGIFDNDVF (193 aa)) enclose the GATase cobBQ-type domain. Cysteine 332 functions as the Nucleophile in the catalytic mechanism. Histidine 435 is an active-site residue.

The protein belongs to the CobB/CobQ family. CobQ subfamily.

Its pathway is cofactor biosynthesis; adenosylcobalamin biosynthesis. Its function is as follows. Catalyzes amidations at positions B, D, E, and G on adenosylcobyrinic A,C-diamide. NH(2) groups are provided by glutamine, and one molecule of ATP is hydrogenolyzed for each amidation. This is Cobyric acid synthase from Listeria monocytogenes serotype 4a (strain HCC23).